A 235-amino-acid chain; its full sequence is Uridylate kinase (235 aa).

9–12 (KLSG) contributes to the ATP binding site. Residues 17-22 (GKDGYG) are involved in allosteric activation by GTP. Residue glycine 51 participates in UMP binding. 2 residues coordinate ATP: glycine 52 and arginine 56. UMP contacts are provided by residues aspartate 71 and 132–139 (TGNPYFTT). Residues threonine 159, tyrosine 165, and aspartate 168 each contribute to the ATP site.

The protein belongs to the UMP kinase family. Homohexamer.

The protein resides in the cytoplasm. The enzyme catalyses UMP + ATP = UDP + ADP. Its pathway is pyrimidine metabolism; CTP biosynthesis via de novo pathway; UDP from UMP (UMPK route): step 1/1. With respect to regulation, allosterically activated by GTP. Inhibited by UTP. In terms of biological role, catalyzes the reversible phosphorylation of UMP to UDP. The sequence is that of Uridylate kinase from Chlorobium luteolum (strain DSM 273 / BCRC 81028 / 2530) (Pelodictyon luteolum).